The chain runs to 313 residues: Pantothenate synthetase (313 aa).

Methionine 43–histidine 50 serves as a coordination point for ATP. Histidine 50 acts as the Proton donor in catalysis. A (R)-pantoate-binding site is contributed by glutamine 75. Glutamine 75 is a binding site for beta-alanine. Glycine 161–aspartate 164 is a binding site for ATP. Glutamine 167 contributes to the (R)-pantoate binding site. Residues valine 190 and leucine 198–arginine 201 each bind ATP.

This sequence belongs to the pantothenate synthetase family. Homodimer.

Its subcellular location is the cytoplasm. The enzyme catalyses (R)-pantoate + beta-alanine + ATP = (R)-pantothenate + AMP + diphosphate + H(+). The protein operates within cofactor biosynthesis; (R)-pantothenate biosynthesis; (R)-pantothenate from (R)-pantoate and beta-alanine: step 1/1. Functionally, catalyzes the condensation of pantoate with beta-alanine in an ATP-dependent reaction via a pantoyl-adenylate intermediate. This chain is Pantothenate synthetase, found in Mycobacterium sp. (strain JLS).